The chain runs to 406 residues: Vitamin D3 dihydroxylase (406 aa).

Low complexity predominate over residues 1 to 15; sequence MTDTATTPQTTDAPA. The segment at 1–24 is disordered; the sequence is MTDTATTPQTTDAPAFPSNRSCPY. Position 81 (threonine 81) interacts with calciol. The heme site is built by histidine 103 and arginine 107. Positions 193, 236, and 293 each coordinate calciol. Arginine 297, histidine 353, and cysteine 355 together coordinate heme.

The protein belongs to the cytochrome P450 family. Requires heme as cofactor.

It localises to the cytoplasm. The enzyme catalyses calciol + 2 reduced [2Fe-2S]-[ferredoxin] + O2 + 2 H(+) = calcidiol + 2 oxidized [2Fe-2S]-[ferredoxin] + H2O. The catalysed reaction is calcidiol + 2 reduced [2Fe-2S]-[ferredoxin] + O2 + 2 H(+) = calcitriol + 2 oxidized [2Fe-2S]-[ferredoxin] + H2O. Its function is as follows. Involved in the metabolism of vitamin D3 (calciol) and of a number of sulfonylurea herbicides. Catalyzes the two-step hydroxylation (25- and 1-alpha-hydroxylation) of vitamin D3 (VD3) to yield its active form 1-alpha,25-dihydroxyvitamin D3 (calcitriol). The first step is the hydroxylation of the C-25 position of VD3 to produce 25-hydroxyvitamin D3 (calcidiol). The second reaction is the hydroxylation of the C1-alpha-position of calcidiol to produce calcitriol. It can also hydroxylate vitamin D2. In Streptomyces griseolus, this protein is Vitamin D3 dihydroxylase.